The chain runs to 486 residues: Scarecrow-like protein 15 (486 aa).

Positions 1 to 28 (MKIPASSPQDTTNNNNNTNSTDSNHLSM) are disordered. Positions 10 to 24 (DTTNNNNNTNSTDSN) are enriched in low complexity. The region spanning 113-485 (DSVDNGGFDF…RALVATSAWR (373 aa)) is the GRAS domain. The tract at residues 120–179 (FDFIEDLIRVVDCVESDELQLAQVVLSRLNQRLRSPAGRPLQRAAFYFKEALGSFLTGSN) is leucine repeat I (LRI). The interval 198-266 (IKEYSGISPI…VSGGFLRVTA (69 aa)) is VHIID. The VHIID signature appears at 232 to 236 (VHVVD). The segment at 278–310 (LVKENLTQFAAEMKIRFQIEFVLMKTFEMLSFK) is leucine repeat II (LRII). Positions 320-410 (TVVLISPAIF…AFVLRPKISA (91 aa)) are PFYRE. An SAW region spans residues 413–485 (ETAADRRHTG…RALVATSAWR (73 aa)).

It belongs to the GRAS family. As to expression, expressed in seedlings, roots, leaves and flowers.

Its subcellular location is the nucleus. Functionally, probable transcription factor involved in plant development. The protein is Scarecrow-like protein 15 (SCL15) of Arabidopsis thaliana (Mouse-ear cress).